We begin with the raw amino-acid sequence, 148 residues long: Large ribosomal subunit protein bL9 (148 aa).

It belongs to the bacterial ribosomal protein bL9 family.

Binds to the 23S rRNA. This Pseudomonas fluorescens (strain SBW25) protein is Large ribosomal subunit protein bL9.